Consider the following 411-residue polypeptide: Carbohydrate sulfotransferase 1 (411 aa).

Over 1–2 (MQ) the chain is Cytoplasmic. The chain crosses the membrane as a helical; Signal-anchor for type II membrane protein span at residues 3 to 23 (CSWKAVLLLALASIAIQYTAI). The Lumenal portion of the chain corresponds to 24–411 (RTFTAKSFHT…VEERDFRPFS (388 aa)). Residue N56 is glycosylated (N-linked (GlcNAc...) asparagine). 3'-phosphoadenylyl sulfate is bound at residue 69 to 75 (TRSGSSF). N-linked (GlcNAc...) asparagine glycosylation is found at N145 and N189. 234-242 (RDPRGILAS) serves as a coordination point for 3'-phosphoadenylyl sulfate. N334 is a glycosylation site (N-linked (GlcNAc...) asparagine). Residues 337-339 (RGD) carry the Cell attachment site motif.

Belongs to the sulfotransferase 1 family. Gal/GlcNAc/GalNAc subfamily. Widely expressed at low level. Expressed in brain and skeletal muscle. Expressed by high endothelial cells (HEVs) and leukocytes.

It localises to the golgi apparatus membrane. It catalyses the reaction 3'-phosphoadenylyl sulfate + keratan = adenosine 3',5'-bisphosphate + keratan 6'-sulfate.. Its pathway is glycan metabolism. Functionally, sulfotransferase that utilizes 3'-phospho-5'-adenylyl sulfate (PAPS) as sulfonate donor to catalyze the transfer of sulfate to position 6 of internal galactose (Gal) residues of keratan. Cooperates with B4GALT4 and B3GNT7 glycosyltransferases and CHST6 sulfotransferase to construct and elongate disulfated disaccharide unit [-&gt;3(6-sulfoGalbeta)1-&gt;4(6-sulfoGlcNAcbeta)1-&gt;] within keratan sulfate polymer. Has a preference for sulfating keratan sulfate, but it also transfers sulfate to the unsulfated polymer. Involved in biosynthesis of phosphacan, a major keratan sulfate proteoglycan in the developing brain. Involved in biosynthesis of 6-sulfoGalbeta-containing O-linked glycans in high endothelial venules of lymph nodes. May act in a synergistic manner with CHST4 to generate sialyl 6',6-disulfo Lewis X motif, a recognition determinant for immune cell receptors implicated in leukocyte trafficking. Catalyzes sulfation of N-acetyllactosamine (LacNAc) oligosaccharides with highest efficiency for sialylated LacNAc structures. This Homo sapiens (Human) protein is Carbohydrate sulfotransferase 1.